Consider the following 309-residue polypeptide: SUR7 family protein FMP45 (309 aa).

Topologically, residues 1–5 (MIFKR) are cytoplasmic. Residues 6–26 (FVNLLVFLFLLGAGLLTFFLI) traverse the membrane as a helical segment. The Extracellular portion of the chain corresponds to 27–116 (LSGGRESGTL…YYLSRVGWAM (90 aa)). N-linked (GlcNAc...) asparagine glycosylation is present at Asn73. A helical membrane pass occupies residues 117-137 (LLISLFFIVLALVPGFLATFL). The Cytoplasmic segment spans residues 138–140 (PFK). Residues 141–161 (AVPVLYCVLSWLAFFFIILAA) traverse the membrane as a helical segment. Residues 162-188 (CLYTGCYVKARKTFRNSGRSARLGPKN) are Extracellular-facing. The helical transmembrane segment at 189-209 (FAFIWTSVFLMLVNAIWSTIF) threads the bilayer. Topologically, residues 210 to 309 (SATHKAHSTY…GLAGPVTVRD (100 aa)) are cytoplasmic. A phosphoserine mark is found at Ser230 and Ser232. Thr235 carries the phosphothreonine modification. Positions 253-309 (GPITAAPVVGQPQPTTTTTPAGNGKFFQKLKTRKQVPSAELEPAGDGGLAGPVTVRD) are disordered. Residues 258 to 274 (APVVGQPQPTTTTTPAG) are compositionally biased toward low complexity.

The protein belongs to the SUR7 family.

Its subcellular location is the cell membrane. In terms of biological role, involved in sporulation and affects the sphingolipid composition of the plasma membrane. This Saccharomyces cerevisiae (strain ATCC 204508 / S288c) (Baker's yeast) protein is SUR7 family protein FMP45 (FMP45).